Here is a 292-residue protein sequence, read N- to C-terminus: Nucleophosmin (292 aa).

Methionine 1 is subject to N-acetylmethionine. Positions 1–117 are necessary for interaction with APEX1; sequence MEDSMDMDMS…PVHISGQHLV (117 aa). A required for interaction with SENP3 region spans residues 1–185; the sequence is MEDSMDMDMS…DDDDFDEEET (185 aa). Serine 4 bears the Phosphoserine; by PLK1 and PLK2 mark. The residue at position 10 (serine 10) is a Phosphoserine. A Glycyl lysine isopeptide (Lys-Gly) (interchain with G-Cter in SUMO2) cross-link involves residue lysine 27. The residue at position 32 (lysine 32) is an N6-acetyllysine; alternate. A Glycyl lysine isopeptide (Lys-Gly) (interchain with G-Cter in SUMO1); alternate cross-link involves residue lysine 32. A Glycyl lysine isopeptide (Lys-Gly) (interchain with G-Cter in SUMO2); alternate cross-link involves residue lysine 32. Phosphoserine is present on serine 43. A Phosphotyrosine modification is found at tyrosine 67. Phosphoserine is present on serine 70. Phosphothreonine is present on residues threonine 75 and threonine 95. A phosphoserine mark is found at serine 125 and serine 139. Residues 138 to 248 are disordered; sequence MSGKRSAPGG…PSSVEDIKAK (111 aa). Lysine 141 is covalently cross-linked (Glycyl lysine isopeptide (Lys-Gly) (interchain with G-Cter in SUMO2)). Position 150 is an N6-acetyllysine; alternate (lysine 150). Residue lysine 150 forms a Glycyl lysine isopeptide (Lys-Gly) (interchain with G-Cter in SUMO2); alternate linkage. The Nuclear localization signal motif lies at 152–157; that stretch reads PQKKVK. Lysine 154 is modified (N6-acetyllysine). A compositionally biased stretch (acidic residues) spans 159-186; the sequence is DEDDEDDDEDDEDDEDDDDDDFDEEETE. Residues 186–214 form an interaction with NOP2 region; the sequence is EEKVPVKKSVRDTPAKNAQKSNQNGKDLK. Residues 187–199 are compositionally biased toward basic and acidic residues; that stretch reads EKVPVKKSVRDTP. A Nuclear localization signal motif is present at residues 190 to 196; the sequence is PVKKSVR. Threonine 198 bears the Phosphothreonine; by CDK1 and CDK2 mark. The segment covering 201-210 has biased composition (polar residues); that stretch reads KNAQKSNQNG. The residue at position 206 (serine 206) is an ADP-ribosylserine. Position 211 is an N6-acetyllysine (lysine 211). Residue lysine 214 forms a Glycyl lysine isopeptide (Lys-Gly) (interchain with G-Cter in SUMO2) linkage. Threonine 217 is modified (phosphothreonine; by CDK1). Residues 221-233 are compositionally biased toward basic and acidic residues; the sequence is KGQESFKKQEKTP. Phosphoserine is present on serine 225. Lysine 227 bears the N6-acetyllysine mark. Residue lysine 228 is modified to N6-acetyllysine; alternate. A Glycyl lysine isopeptide (Lys-Gly) (interchain with G-Cter in SUMO); alternate cross-link involves residue lysine 228. Threonine 232 and threonine 235 each carry phosphothreonine; by CDK1. 2 positions are modified to phosphoserine: serine 240 and serine 241. Positions 241-292 are required for nucleolar localization; the sequence is SVEDIKAKMQASIEKGGSLPKVEAKFINYVKNCFRMTDQEAIQDLWQWRKSL. Lysine 246 is covalently cross-linked (Glycyl lysine isopeptide (Lys-Gly) (interchain with G-Cter in SUMO1); alternate). Glycyl lysine isopeptide (Lys-Gly) (interchain with G-Cter in SUMO2); alternate cross-links involve residues lysine 246 and lysine 248. N6-acetyllysine; alternate is present on lysine 248. A Phosphoserine modification is found at serine 252. An N6-acetyllysine; alternate modification is found at lysine 255. Lysine 255 participates in a covalent cross-link: Glycyl lysine isopeptide (Lys-Gly) (interchain with G-Cter in SUMO1); alternate. A Glycyl lysine isopeptide (Lys-Gly) (interchain with G-Cter in SUMO2); alternate cross-link involves residue lysine 255. The residue at position 258 (serine 258) is a Phosphoserine. Residues lysine 261, lysine 265, and lysine 271 each participate in a glycyl lysine isopeptide (Lys-Gly) (interchain with G-Cter in SUMO2); alternate cross-link. Lysine 261 participates in a covalent cross-link: Glycyl lysine isopeptide (Lys-Gly) (interchain with G-Cter in SUMO); alternate. An N6-acetyllysine; alternate mark is found at lysine 265 and lysine 271. Residue lysine 265 forms a Glycyl lysine isopeptide (Lys-Gly) (interchain with G-Cter in SUMO1); alternate linkage. The residue at position 265 (lysine 265) is an N6-succinyllysine; alternate. Position 277 is a phosphothreonine (threonine 277). Position 290 is an N6-acetyllysine (lysine 290).

It belongs to the nucleoplasmin family. As to quaternary structure, decamer formed by two pentameric rings associated in a head-to-head fashion. Disulfide-linked dimers under certain conditions. Interacts with NSUN2 and SENP3. The SWAP complex consists of NPM1, NCL, PARP1 and SWAP70. Interacts with the methylated form of RPS10. Interacts (via N-terminal domain) with APEX1; the interaction is RNA-dependent and decreases peroxide-damaged cells. Interacts with NEK2. Interacts with ROCK2 and BRCA2. Interacts with RPGR. Interacts with CENPW. Interacts with EIF2AK2/PKR. Interacts with DDX31; this interaction prevents interaction between NPM1 and HDM2. Interacts with MYC; competitive with NOP53. Interacts with NOP53; the interaction is direct and competitive with MYC. Interacts with LRRC34. Interacts with RRP1B. Interacts with NPM3. Interacts with ALKBH2. Interacts with TTF1 (via C-terminal region). Interacts with NOP2. Interacts with ARID3C (via REKLES DOMAIN); the interaction mediates ARID3C nuclear shuttling. Post-translationally, acetylated at C-terminal lysine residues, thereby increasing affinity to histones. ADP-ribosylated. In terms of processing, phosphorylated at Ser-4 by PLK1 and PLK2. Phosphorylation at Ser-4 by PLK2 in S phase is required for centriole duplication and is sufficient to trigger centriole replication. Phosphorylation at Ser-4 by PLK1 takes place during mitosis. Phosphorylated by CDK2 at Ser-125 and Thr-198. Phosphorylation at Thr-198 may trigger initiation of centrosome duplication. Phosphorylated by CDK1 at Thr-198, Thr-217, Thr-232 and Thr-235 during cell mitosis. When these four sites are phosphorated, RNA-binding activity seem to be abolished. May be phosphorylated at Ser-70 by NEK2. The Thr-198 phosphorylated form has higher affinity for ROCK2. Post-translationally, sumoylated by ARF. Ubiquitinated. Ubiquitination leads to proteasomal degradation. Deubiquitinated by USP36. In terms of tissue distribution, expressed in B-cells that have been induced to switch to various Ig isotypes.

It is found in the nucleus. The protein resides in the nucleolus. The protein localises to the nucleoplasm. Its subcellular location is the cytoplasm. It localises to the cytoskeleton. It is found in the microtubule organizing center. The protein resides in the centrosome. Its function is as follows. Involved in diverse cellular processes such as ribosome biogenesis, centrosome duplication, protein chaperoning, histone assembly, cell proliferation, and regulation of tumor suppressors p53/TP53 and ARF. Binds ribosome presumably to drive ribosome nuclear export. Associated with nucleolar ribonucleoprotein structures and bind single-stranded nucleic acids. Acts as a chaperonin for the core histones H3, H2B and H4. Stimulates APEX1 endonuclease activity on apurinic/apyrimidinic (AP) double-stranded DNA but inhibits APEX1 endonuclease activity on AP single-stranded RNA. May exert a control of APEX1 endonuclease activity within nucleoli devoted to repair AP on rDNA and the removal of oxidized rRNA molecules. In concert with BRCA2, regulates centrosome duplication. Regulates centriole duplication: phosphorylation by PLK2 is able to trigger centriole replication. Negatively regulates the activation of EIF2AK2/PKR and suppresses apoptosis through inhibition of EIF2AK2/PKR autophosphorylation. Antagonizes the inhibitory effect of ATF5 on cell proliferation and relieves ATF5-induced G2/M blockade. In complex with MYC enhances the transcription of MYC target genes. May act as chaperonin or cotransporter in the nucleolar localization of transcription termination factor TTF1. The protein is Nucleophosmin (Npm1) of Mus musculus (Mouse).